The primary structure comprises 646 residues: Long-chain fatty acid transport protein 1 (646 aa).

The Extracellular portion of the chain corresponds to 1 to 13 (MRTPGAGTASVAS). The helical transmembrane segment at 14 to 34 (LGLLWLLGLPWTWSAAAAFGV) threads the bilayer. Residues 35-646 (YVGSGGWRFL…ARICAGDFSL (612 aa)) lie on the Cytoplasmic side of the membrane. Positions 191-475 (EVSEQLGKSL…YVSDSATNKK (285 aa)) are sufficient for oligomerization. An AMP-binding site is contributed by 246–257 (YIYTSGTTGLPK).

Belongs to the ATP-dependent AMP-binding enzyme family. In terms of assembly, self-associates. May function as a homodimer. Interacts with EPRS1; mediates the translocation of SLC27A1 from the cytoplasm to the plasma membrane thereby increasing the uptake of long-chain fatty acids. Interacts with DGAT2 and this interaction is enhanced in the presence of ZFYVE1. As to expression, expressed in muscle.

The protein localises to the cell membrane. Its subcellular location is the endomembrane system. It localises to the cytoplasm. The enzyme catalyses a fatty acid(in) = a fatty acid(out). It catalyses the reaction (9Z)-octadecenoate(out) = (9Z)-octadecenoate(in). The catalysed reaction is hexadecanoate(out) = hexadecanoate(in). It carries out the reaction (5Z,8Z,11Z,14Z)-eicosatetraenoate(out) = (5Z,8Z,11Z,14Z)-eicosatetraenoate(in). The enzyme catalyses (9Z,12Z)-octadecadienoate(out) = (9Z,12Z)-octadecadienoate(in). It catalyses the reaction a long-chain fatty acid + ATP + CoA = a long-chain fatty acyl-CoA + AMP + diphosphate. The catalysed reaction is (5Z,8Z,11Z,14Z)-eicosatetraenoate + ATP + CoA = (5Z,8Z,11Z,14Z)-eicosatetraenoyl-CoA + AMP + diphosphate. It carries out the reaction a very long-chain fatty acid + ATP + CoA = a very long-chain fatty acyl-CoA + AMP + diphosphate. The enzyme catalyses tetracosanoate + ATP + CoA = tetracosanoyl-CoA + AMP + diphosphate. Its activity is regulated as follows. Inhibited by Triacsin C. Its function is as follows. Mediates the import of long-chain fatty acids (LCFA) into the cell by facilitating their transport at the plasma membrane. Also functions as an acyl-CoA ligase catalyzing the ATP-dependent formation of fatty acyl-CoA using LCFA and very-long-chain fatty acids (VLCFA) as substrates, which prevents fatty acid efflux from cells and might drive more fatty acid uptake. May act directly as a bona fide transporter, or alternatively, in a cytoplasmic or membrane-associated multimeric protein complex to trap and draw fatty acids towards accumulation. Plays a pivotal role in regulating available LCFA substrates from exogenous sources in tissues undergoing high levels of beta-oxidation or triglyceride synthesis. May be involved in regulation of cholesterol metabolism. Probably involved in fatty acid transport across the blood barrier. The protein is Long-chain fatty acid transport protein 1 of Rattus norvegicus (Rat).